The following is a 222-amino-acid chain: MKCFLICGSKKEPISINGTPNVVKSKYFEGDVKVRLRDYETPDEEYFEQSNDTCSIMIRGRFLPTESTLTADDILFGNQFEKPLRDVLPMGSNLLMKGLQYVDPSIEFDLYCDQPWAFSPFFATMTKMQVSDALLPMEYFEDHSSRRSQMQQQVIRQESSIDPNKYILADFCNPFFNPSTLSISIPYTKMSFSIKNYYNGQPLRYFCKTRDGNVIFAVEFDL.

It belongs to the UPF0590 family.

It is found in the cytoplasm. The protein resides in the nucleus. This is DUF1769 family protein from Schizosaccharomyces pombe (strain 972 / ATCC 24843) (Fission yeast).